Consider the following 417-residue polypeptide: Phosphoglycerate kinase 1 (417 aa).

The residue at position 2 (Ser-2) is an N-acetylserine. Ser-2 and Ser-4 each carry phosphoserine. Residue Lys-6 is modified to N6-succinyllysine. Position 11 is an N6-acetyllysine (Lys-11). Positions 23, 24, 25, 26, 38, and 39 each coordinate (2R)-3-phosphoglycerate. The tract at residues 38 to 43 (QRIKAA) is mitochondrial targeting region exposed following cis-trans isomerization by PIN1 and recognized by the TOM complex for mitochondrial translocation of the protein. Lys-48 is subject to N6-acetyllysine; alternate. N6-succinyllysine; alternate is present on Lys-48. Residues Ser-62, His-63, Gly-65, and Arg-66 each coordinate (2R)-3-phosphoglycerate. At Lys-75 the chain carries N6-acetyllysine. Residue Tyr-76 is modified to Phosphotyrosine. N6-acetyllysine is present on residues Lys-86 and Lys-91. At Lys-97 the chain carries N6-acetyllysine; alternate. At Lys-97 the chain carries N6-(2-hydroxyisobutyryl)lysine; alternate. The (2R)-3-phosphoglycerate site is built by Leu-122 and Arg-123. Position 131 is an N6-acetyllysine; alternate (Lys-131). Lys-131 carries the post-translational modification N6-malonyllysine; alternate. Position 146 is an N6-acetyllysine (Lys-146). (2R)-3-phosphoglycerate-binding residues include His-170 and Arg-171. Lys-191 bears the N6-succinyllysine mark. At Tyr-196 the chain carries Phosphotyrosine. Lys-199 is modified (N6-acetyllysine). Ser-203 bears the Phosphoserine mark. Gly-214 contributes to the ADP binding site. A CDP-binding site is contributed by Gly-214. AMP is bound by residues Ala-215 and Lys-216. Ala-215 provides a ligand contact to ATP. Residue Ala-215 coordinates Mg(2+). Lys-216 is modified (N6-(2-hydroxyisobutyryl)lysine). Residues Ala-218 and Asp-219 each contribute to the Mg(2+) site. Asp-219 lines the CDP pocket. Lys-220 contributes to the AMP binding site. Lys-220 contributes to the ATP binding site. Lys-220 bears the N6-(2-hydroxyisobutyryl)lysine mark. Gly-238 contacts ADP. A CDP-binding site is contributed by Gly-238. Residue Gly-239 coordinates AMP. Gly-239 contributes to the ATP binding site. An N6-acetyllysine mark is found at Lys-267 and Lys-291. Gly-313 is an AMP binding site. Gly-313 contributes to the ATP binding site. Position 323 is an N6-(2-hydroxyisobutyryl)lysine (Lys-323). CDP contacts are provided by Gly-338, Val-340, and Phe-343. Residue Phe-343 coordinates ADP. Position 344 (Glu-344) interacts with AMP. Glu-344 lines the ATP pocket. Lys-361 bears the N6-acetyllysine mark. Residues Asp-375 and Thr-376 each coordinate ATP. Asp-375 is a Mg(2+) binding site.

This sequence belongs to the phosphoglycerate kinase family. As to quaternary structure, monomer. Interacts with kinase MAPK1/ERK2; the interaction is direct, occurs under hypoxic conditions, and promotes its interaction with PIN1. Interacts with peptidyl-prolyl cis-trans isomerase PIN1; the interaction is direct, occurs under hypoxic conditions, and targets the protein to the mitochondrion by promoting interactions with the TOM complex. Interacts with mitochondrial circRNA mcPGK1 (via its 2nd stem-loop); the interaction is direct and targets the protein to the mitochondrion by promoting interactions with the TOM complex. Interacts with pyruvate dehydrogenase kinase PDK1; the interaction is direct, occurs under hypoxic conditions and leads to PDK1-mediated inhibition of pyruvate dehydrogenase complex activity. It depends on Mg(2+) as a cofactor. Post-translationally, phosphorylated at Ser-203 by MAPK1/ERK2 under hypoxic conditions, which promotes its mitochondrial targeting. As to expression, testis, lung, brain, skeletal muscle, liver, intestine, and kidney (at protein level).

Its subcellular location is the cytoplasm. It localises to the cytosol. The protein resides in the mitochondrion matrix. The enzyme catalyses (2R)-3-phosphoglycerate + ATP = (2R)-3-phospho-glyceroyl phosphate + ADP. The catalysed reaction is L-seryl-[protein] + ATP = O-phospho-L-seryl-[protein] + ADP + H(+). Its pathway is carbohydrate degradation; glycolysis; pyruvate from D-glyceraldehyde 3-phosphate: step 2/5. In terms of biological role, catalyzes one of the two ATP producing reactions in the glycolytic pathway via the reversible conversion of 1,3-diphosphoglycerate to 3-phosphoglycerate. Both L- and D- forms of purine and pyrimidine nucleotides can be used as substrates, but the activity is much lower on pyrimidines. In addition to its role as a glycolytic enzyme, it seems that PGK-1 acts as a polymerase alpha cofactor protein (primer recognition protein). Acts as a protein kinase when localized to the mitochondrion where it phosphorylates pyruvate dehydrogenase kinase PDK1 to inhibit pyruvate dehydrogenase complex activity and suppress the formation of acetyl-coenzyme A from pyruvate, and consequently inhibit oxidative phosphorylation and promote glycolysis. May play a role in sperm motility. The protein is Phosphoglycerate kinase 1 (Pgk1) of Mus musculus (Mouse).